The sequence spans 250 residues: 5-oxoprolinase subunit A (250 aa).

The protein belongs to the LamB/PxpA family. In terms of assembly, forms a complex composed of PxpA, PxpB and PxpC.

It catalyses the reaction 5-oxo-L-proline + ATP + 2 H2O = L-glutamate + ADP + phosphate + H(+). Functionally, catalyzes the cleavage of 5-oxoproline to form L-glutamate coupled to the hydrolysis of ATP to ADP and inorganic phosphate. The protein is 5-oxoprolinase subunit A of Thermus thermophilus (strain ATCC 27634 / DSM 579 / HB8).